The chain runs to 518 residues: Probable protein phosphatase 2C 14 (518 aa).

Low complexity-rich tracts occupy residues 1 to 10 (MVEAAAGRRS) and 86 to 105 (PQRQ…APGA). Disordered stretches follow at residues 1-31 (MVEA…QQHQ) and 86-108 (PQRQ…ADGR). One can recognise a PPM-type phosphatase domain in the interval 129–437 (VASLYTLQGK…DDCAVVCLFL (309 aa)). 2 residues coordinate Mn(2+): D165 and G166. Residues 192–222 (TDEGRQTSTSSIKSNGDETGSPGNMGRDAEQ) are disordered. Residues 197–213 (QTSTSSIKSNGDETGSP) show a composition bias toward polar residues. Mn(2+)-binding residues include D382 and D428.

Belongs to the PP2C family. The cofactor is Mg(2+). Requires Mn(2+) as cofactor.

The enzyme catalyses O-phospho-L-seryl-[protein] + H2O = L-seryl-[protein] + phosphate. It carries out the reaction O-phospho-L-threonyl-[protein] + H2O = L-threonyl-[protein] + phosphate. In Oryza sativa subsp. japonica (Rice), this protein is Probable protein phosphatase 2C 14.